The chain runs to 65 residues: Conotoxin TsMRCL-04 (65 aa).

A signal peptide spans 1–20; sequence MRCLPVFIILLLLIPSAASA. Positions 21–48 are excised as a propeptide; sequence AQPETKDDAALASFYDNAKRTLQRHWAK. Glu63 carries the post-translational modification Glutamic acid 1-amide.

Belongs to the conotoxin T superfamily. In terms of processing, contains 2 disulfide bonds that can be either 'C1-C3, C2-C4' or 'C1-C4, C2-C3', since these disulfide connectivities have been observed for conotoxins with cysteine framework V (for examples, see AC P0DQQ7 and AC P81755). In terms of tissue distribution, expressed by the venom duct.

The protein localises to the secreted. In Conus tessulatus (Tessellate cone), this protein is Conotoxin TsMRCL-04.